A 668-amino-acid chain; its full sequence is Golgin candidate 2 (668 aa).

Positions 22–317 are disordered; it reads QAADSLRKDE…RQREERRRRR (296 aa). A compositionally biased stretch (basic and acidic residues) spans 26–39; the sequence is SLRKDEKSETHDEV. 2 stretches are compositionally biased toward polar residues: residues 64-86 and 100-113; these read GSDS…LSSS and SAPS…NTKL. Composition is skewed to low complexity over residues 123 to 141 and 168 to 178; these read STPN…GGTS and SSSSNVVNSRG. 3 stretches are compositionally biased toward basic and acidic residues: residues 184–207, 215–237, and 250–259; these read TNKE…RNAP, THKE…RRSA, and GKRDGRESRR. Over residues 290–302 the composition is skewed to acidic residues; that stretch reads DESESDYESDSST. The span at 303–312 shows a compositional bias: basic and acidic residues; the sequence is DSERERQREE. Residues 331 to 539 adopt a coiled-coil conformation; it reads AVIKERENMV…SQVEALSSEK (209 aa). 2 helical membrane-spanning segments follow: residues 594-614 and 622-642; these read KHLG…TVFL and IWAV…LLSH.

It is found in the golgi apparatus membrane. In terms of biological role, golgi matrix protein playing a role in tethering of vesicles to Golgi membranes and in maintaining the overall structure of the Golgi apparatus. This Arabidopsis thaliana (Mouse-ear cress) protein is Golgin candidate 2 (GC2).